An 817-amino-acid chain; its full sequence is Probable beta-glucosidase G (817 aa).

Residues 1 to 20 (MANIAHLIVSGLLAATVAHG) form the signal peptide. Asparagine 40, asparagine 58, asparagine 229, and asparagine 276 each carry an N-linked (GlcNAc...) asparagine glycan. The active site involves aspartate 304. N-linked (GlcNAc...) asparagine glycosylation is found at asparagine 343, asparagine 350, asparagine 402, asparagine 507, asparagine 563, asparagine 584, asparagine 623, asparagine 662, asparagine 679, and asparagine 715.

This sequence belongs to the glycosyl hydrolase 3 family.

It is found in the secreted. The enzyme catalyses Hydrolysis of terminal, non-reducing beta-D-glucosyl residues with release of beta-D-glucose.. It functions in the pathway glycan metabolism; cellulose degradation. In terms of biological role, beta-glucosidases are one of a number of cellulolytic enzymes involved in the degradation of cellulosic biomass. Catalyzes the last step releasing glucose from the inhibitory cellobiose. In Aspergillus terreus (strain NIH 2624 / FGSC A1156), this protein is Probable beta-glucosidase G (bglG).